Reading from the N-terminus, the 128-residue chain is Azurin (128 aa).

The region spanning 1 to 128 (AECSVDIQGN…ALMKGTLTLK (128 aa)) is the Plastocyanin-like domain. A disulfide bond links cysteine 3 and cysteine 26. Residues histidine 46, cysteine 112, histidine 117, and methionine 121 each coordinate Cu cation.

It is found in the periplasm. Its function is as follows. Transfers electrons from cytochrome c551 to cytochrome oxidase. This Pseudomonas aeruginosa protein is Azurin.